The primary structure comprises 454 residues: Exopolyphosphatase PRUNE1 (454 aa).

Residue Met-1 is modified to N-acetylmethionine. Mn(2+) contacts are provided by Asp-28, Asp-30, Asp-106, and Asp-179. A DHH motif motif is present at residues 106-108; it reads DHH. The essential for homodimerization stretch occupies residues 394-421; sequence SLIAGLSQDDEDPPLPPTPMNSLVDECP. Positions 398–421 are disordered; sequence GLSQDDEDPPLPPTPMNSLVDECP. A Phosphoserine modification is found at Ser-400. The residue at position 411 (Thr-411) is a Phosphothreonine. A Phosphoserine modification is found at Ser-415.

Belongs to the PPase class C family. Prune subfamily. As to quaternary structure, homooligomer. Able to homodimerize via its C-terminal domain. Interacts with NME1. Interacts with GSK3; at focal adhesion complexes where paxillin and vinculin are colocalized. Interacts with alpha and beta tubulin. It depends on Mn(2+) as a cofactor.

Its subcellular location is the cytoplasm. It localises to the nucleus. It is found in the cell junction. The protein localises to the focal adhesion. It catalyses the reaction diphosphate + H2O = 2 phosphate + H(+). Its activity is regulated as follows. Activated by magnesium ions and inhibited by manganese ions. Inhibited by dipyridamole, moderately sensitive to IBMX and inhibited by vinpocetine. In terms of biological role, phosphodiesterase (PDE) that has higher activity toward cAMP than cGMP, as substrate. Plays a role in cell proliferation, migration and differentiation, and acts as a negative regulator of NME1. Plays a role in the regulation of neurogenesis. Involved in the regulation of microtubule polymerization. The chain is Exopolyphosphatase PRUNE1 (Prune1) from Rattus norvegicus (Rat).